The chain runs to 1391 residues: DNA-directed RNA polymerase subunit beta' (1391 aa).

Zn(2+)-binding residues include C72, C74, C87, and C90. The Mg(2+) site is built by D462, D464, and D466. Zn(2+) contacts are provided by C816, C890, C897, and C900.

This sequence belongs to the RNA polymerase beta' chain family. The RNAP catalytic core consists of 2 alpha, 1 beta, 1 beta' and 1 omega subunit. When a sigma factor is associated with the core the holoenzyme is formed, which can initiate transcription. Mg(2+) serves as cofactor. The cofactor is Zn(2+).

It carries out the reaction RNA(n) + a ribonucleoside 5'-triphosphate = RNA(n+1) + diphosphate. Its function is as follows. DNA-dependent RNA polymerase catalyzes the transcription of DNA into RNA using the four ribonucleoside triphosphates as substrates. This chain is DNA-directed RNA polymerase subunit beta', found in Neisseria meningitidis serogroup C / serotype 2a (strain ATCC 700532 / DSM 15464 / FAM18).